The primary structure comprises 215 residues: Adenylate kinase (215 aa).

10–15 (GAGKGT) is an ATP binding site. The tract at residues 30–59 (STGDILRANVREGTELGLAAKEYMDKGELV) is NMP. AMP contacts are provided by residues threonine 31, arginine 36, 57 to 59 (ELV), 85 to 88 (GYPR), and glutamine 92. An LID region spans residues 126-162 (GRLMCNCGASYHRTFNPPKKDDVCDICGGKVFQRADD). Arginine 127 serves as a coordination point for ATP. The Zn(2+) site is built by cysteine 130 and cysteine 132. 135–136 (SY) is an ATP binding site. Zn(2+)-binding residues include cysteine 149 and cysteine 152. AMP-binding residues include arginine 159 and arginine 170. Lysine 198 provides a ligand contact to ATP.

Belongs to the adenylate kinase family. In terms of assembly, monomer.

It localises to the cytoplasm. The catalysed reaction is AMP + ATP = 2 ADP. It participates in purine metabolism; AMP biosynthesis via salvage pathway; AMP from ADP: step 1/1. Catalyzes the reversible transfer of the terminal phosphate group between ATP and AMP. Plays an important role in cellular energy homeostasis and in adenine nucleotide metabolism. The sequence is that of Adenylate kinase from Methanosarcina barkeri (strain Fusaro / DSM 804).